Here is a 365-residue protein sequence, read N- to C-terminus: ATP-dependent (S)-NAD(P)H-hydrate dehydratase (365 aa).

A chloroplast-targeting transit peptide spans 1–43 (MLVKPSIISGLVRLTSHSPSSSSSVLRRQEFLVRTLCGSPIIR). The residue at position 2 (Leu-2) is an N-acetylserine. A YjeF C-terminal domain is found at 53 to 361 (AESVLRTVTP…ECLGESLEDI (309 aa)). (6S)-NADPHX is bound by residues Gly-169 and 222–228 (NVNEYKR). Residues 262–266 (KGKSD) and 281–290 (GSPRRCGGQG) each bind ATP. Asp-291 contacts (6S)-NADPHX.

Belongs to the NnrD/CARKD family. It depends on Mg(2+) as a cofactor.

It localises to the plastid. Its subcellular location is the chloroplast. The protein localises to the cytoplasm. The enzyme catalyses (6S)-NADHX + ATP = ADP + phosphate + NADH + H(+). The catalysed reaction is (6S)-NADPHX + ATP = ADP + phosphate + NADPH + H(+). Functionally, catalyzes the dehydration of the S-form of NAD(P)HX at the expense of ATP, which is converted to ADP. Together with NAD(P)HX epimerase, which catalyzes the epimerization of the S- and R-forms, the enzyme allows the repair of both epimers of NAD(P)HX, a damaged form of NAD(P)H that is a result of enzymatic or heat-dependent hydration. This is ATP-dependent (S)-NAD(P)H-hydrate dehydratase from Arabidopsis thaliana (Mouse-ear cress).